The chain runs to 821 residues: Epidermal growth factor receptor kinase substrate 8 (821 aa).

Polar residues-rich tracts occupy residues 1–10 (MNGHMSNRSS) and 17–28 (SQLNGYGSSPPY). The interval 1-39 (MNGHMSNRSSGYGVYPSQLNGYGSSPPYSQMDREHSSRT) is disordered. Ser58 is subject to Phosphoserine. One can recognise a PTB domain in the interval 64 to 194 (QYRVEHLTTF…SDSKGGKQKR (131 aa)). Disordered regions lie at residues 204 to 224 (KADP…PGTV), 295 to 320 (SELS…TLRA), and 461 to 525 (ANAE…RNYD). The span at 208–221 (GIPPPPRAPAPVPP) shows a compositional bias: pro residues. Thr223 is subject to Phosphothreonine. Residues 299-309 (KRKKSKKSKRK) show a composition bias toward basic residues. A Phosphothreonine modification is found at Thr317. The segment covering 464–476 (EHQRKQDSKRLST) has biased composition (basic and acidic residues). At Ser475 the chain carries Phosphoserine. The SH3 domain maps to 530 to 589 (QPKKYAKSKYDFVARNSSELSVMKDDVLEILDDRRQWWKVRNASGDSGFVPNNILDIMRT). The segment at 610 to 683 (TEYGLRSADT…YKQLPVDRRK (74 aa)) is disordered. Over residues 622–641 (APSPPPTPAPVPVPLPPSVP) the composition is skewed to pro residues. Position 624 is a phosphoserine; by MAPK (Ser624). Position 628 is a phosphothreonine; by MAPK (Thr628). Low complexity predominate over residues 642–651 (APVSVPKVPA). Residues 648–821 (KVPANVTRQN…VESFDEGSSH (174 aa)) form an effector region region. Phosphoserine occurs at positions 658 and 661. A compositionally biased stretch (basic and acidic residues) spans 670 to 683 (DSQRYKQLPVDRRK). Positions 679 to 697 (VDRRKSQMEEVQDELFQRL) are amphipathic helix. Ser684 bears the Phosphoserine mark. Helix bundle stretches follow at residues 717 to 737 (VINI…QSKG), 751 to 756 (GAQLFS), 761 to 766 (ELRSVC), and 765 to 784 (VCPE…AALE). The segment at 800–821 (QEKISAAASDSGVESFDEGSSH) is disordered. Phosphoserine occurs at positions 810 and 814.

The protein belongs to the EPS8 family. Homodimer. Part of a complex consisting of ABI1, EPS8 and SOS1. Interacts with BAIAP2. Interacts with SHB and LANCL1. Interacts with EGFR; mediates EPS8 phosphorylation. Interacts with MYO15A and WHRN. Post-translationally, ubiquitinated by the SCF(FBXW5) E3 ubiquitin-protein ligase complex during G2 phase, leading to its transient degradation and subsequent cell shape changes required to allow mitotic progression. Reappears at the midzone of dividing cells. Phosphorylation at Ser-624 and Thr-628 by MAPK following BDNF treatment promotes removal from actin and filopodia formation. Phosphorylated by several receptor tyrosine kinases. In terms of tissue distribution, expressed in neuronal cell body and neurites, and prominently enriched in the axonal growth cone. Expressed at the tips of cochlear hair cells stereocilia.

It is found in the cytoplasm. It localises to the cell cortex. The protein resides in the cell projection. The protein localises to the ruffle membrane. Its subcellular location is the growth cone. It is found in the stereocilium. It localises to the synapse. The protein resides in the synaptosome. In terms of biological role, signaling adapter that controls various cellular protrusions by regulating actin cytoskeleton dynamics and architecture. Depending on its association with other signal transducers, can regulate different processes. Together with SOS1 and ABI1, forms a trimeric complex that participates in transduction of signals from Ras to Rac by activating the Rac-specific guanine nucleotide exchange factor (GEF) activity. Acts as a direct regulator of actin dynamics by binding actin filaments and has both barbed-end actin filament capping and actin bundling activities depending on the context. Displays barbed-end actin capping activity when associated with ABI1, thereby regulating actin-based motility process: capping activity is auto-inhibited and inhibition is relieved upon ABI1 interaction. Also shows actin bundling activity when associated with BAIAP2, enhancing BAIAP2-dependent membrane extensions and promoting filopodial protrusions. Involved in the regulation of processes such as axonal filopodia growth, stereocilia length, dendritic cell migration and cancer cell migration and invasion. Acts as a regulator of axonal filopodia formation in neurons: in the absence of neurotrophic factors, negatively regulates axonal filopodia formation via actin-capping activity. In contrast, it is phosphorylated in the presence of BDNF leading to inhibition of its actin-capping activity and stimulation of filopodia formation. Component of a complex with WHRN and MYO15A that localizes at stereocilia tips and is required for elongation of the stereocilia actin core. Indirectly involved in cell cycle progression; its degradation following ubiquitination being required during G2 phase to promote cell shape changes. This is Epidermal growth factor receptor kinase substrate 8 (Eps8) from Mus musculus (Mouse).